A 48-amino-acid chain; its full sequence is Delta-actitoxin-Bcg1b (48 aa).

3 disulfide bridges follow: Cys4–Cys45, Cys6–Cys35, and Cys28–Cys46.

It belongs to the sea anemone sodium channel inhibitory toxin family. Type I subfamily.

It localises to the secreted. The protein resides in the nematocyst. Binds to the sodium channels Nav1.1/SCN1A (EC(50)=165 nM), Nav1.5/SCN5A (EC(50)=103 nM) and Nav1.6/SCN8A (EC(50)=133 nM), thereby delaying their inactivation. Also inhibits Nav1.2/SCN2A, Nav1.3/SCN3A, and Nav1.4/SCN4A, but to a lesser extent. Inhibits Nav1.5 differently from isoforms Nav1.1 and Nav1.6. In Nav1.5 the effect consists in a right-shift of inactivation; whereas in both Nav1.1 and Nav1.6 the effect consists in an incomplete inactivation. This is Delta-actitoxin-Bcg1b from Bunodosoma cangicum (Sea anemone).